A 75-amino-acid polypeptide reads, in one-letter code: U14-hexatoxin-Mg1a (75 aa).

A signal peptide spans 1 to 19; that stretch reads MKLTLFILIVFVVLANVYA. Residues 20–31 constitute a propeptide that is removed on maturation; sequence AGISERNIIGGR.

Post-translationally, contains 4 disulfide bonds. In terms of tissue distribution, expressed by the venom gland.

It is found in the secreted. No toxicity is observed upon intracranial injection into mice and intrathorax injection into crickets. The sequence is that of U14-hexatoxin-Mg1a from Macrothele gigas (Japanese funnel web spider).